Consider the following 123-residue polypeptide: Small ribosomal subunit protein uS12 (123 aa).

Asp-89 carries the post-translational modification 3-methylthioaspartic acid. The disordered stretch occupies residues 104–123 (TAGVKDRKQARSKYGAKRPK). Residues 113–123 (ARSKYGAKRPK) are compositionally biased toward basic residues.

Belongs to the universal ribosomal protein uS12 family. Part of the 30S ribosomal subunit. Contacts proteins S8 and S17. May interact with IF1 in the 30S initiation complex.

In terms of biological role, with S4 and S5 plays an important role in translational accuracy. Its function is as follows. Interacts with and stabilizes bases of the 16S rRNA that are involved in tRNA selection in the A site and with the mRNA backbone. Located at the interface of the 30S and 50S subunits, it traverses the body of the 30S subunit contacting proteins on the other side and probably holding the rRNA structure together. The combined cluster of proteins S8, S12 and S17 appears to hold together the shoulder and platform of the 30S subunit. This chain is Small ribosomal subunit protein uS12, found in Chromobacterium violaceum (strain ATCC 12472 / DSM 30191 / JCM 1249 / CCUG 213 / NBRC 12614 / NCIMB 9131 / NCTC 9757 / MK).